A 496-amino-acid chain; its full sequence is Beta-amylase (496 aa).

Residues Asp-54, His-94, and Asp-102 each coordinate substrate. Glu-187 serves as the catalytic Proton donor. Residues Lys-296, His-301, and Thr-343 each coordinate substrate. Residue Glu-381 is the Proton acceptor of the active site. Substrate-binding positions include Asn-382–Ala-383 and Arg-421.

It belongs to the glycosyl hydrolase 14 family.

It carries out the reaction Hydrolysis of (1-&gt;4)-alpha-D-glucosidic linkages in polysaccharides so as to remove successive maltose units from the non-reducing ends of the chains.. The protein is Beta-amylase (BMY1) of Vigna unguiculata (Cowpea).